We begin with the raw amino-acid sequence, 849 residues long: Ribosome biogenesis protein ERB1 (849 aa).

Residues 1 to 130 (MARNSIKKSP…PKDDDLSRIN (130 aa)) form a disordered region. Acidic residues-rich tracts occupy residues 29–44 (EAEE…DELN) and 51–123 (ASDD…EPKD). The required for interaction with NOP7 stretch occupies residues 286–405 (RFVPSKHEAK…LRQVPGYQDS (120 aa)). A required for interaction with YTM1 region spans residues 405 to 441 (SVRERFERSLDLYLAPRVRHNKLNIDPDSLIPDLPSP). 2 WD repeats span residues 457 to 496 (GHTG…QVYK) and 505 to 545 (NNED…FDIE). Residues 569 to 581 (KISSQKEEDNKES) are compositionally biased toward basic and acidic residues. A disordered region spans residues 569–619 (KISSQKEEDNKESDNEDEDEEEDNDDDDDDDEPETSSTVEPKKEVAKWYPP). Over residues 582-602 (DNEDEDEEEDNDDDDDDDEPE) the composition is skewed to acidic residues. WD repeat units follow at residues 633-675 (QCRK…SQSP), 678-716 (KSKG…LLKK), 719-758 (PGVR…TPYK), 762-802 (YHEK…DLMT), and 818-849 (INQI…LWTT).

It belongs to the WD repeat BOP1/ERB1 family. In terms of assembly, component of the NOP7 complex, composed of ERB1, NOP7 and YTM1. The complex is held together by ERB1, which interacts with NOP7 via its N-terminal domain and with YTM1 via a high-affinity interaction between the seven-bladed beta-propeller domains of the 2 proteins. The NOP7 complex associates with the 66S pre-ribosome.

Its subcellular location is the nucleus. It localises to the nucleolus. The protein localises to the nucleoplasm. Functionally, component of the NOP7 complex, which is required for maturation of the 25S and 5.8S ribosomal RNAs and formation of the 60S ribosome. This is Ribosome biogenesis protein ERB1 from Candida albicans (strain SC5314 / ATCC MYA-2876) (Yeast).